Here is a 469-residue protein sequence, read N- to C-terminus: Argininosuccinate lyase (469 aa).

The protein belongs to the lyase 1 family. Argininosuccinate lyase subfamily.

The protein localises to the cytoplasm. The enzyme catalyses 2-(N(omega)-L-arginino)succinate = fumarate + L-arginine. The protein operates within amino-acid biosynthesis; L-arginine biosynthesis; L-arginine from L-ornithine and carbamoyl phosphate: step 3/3. The sequence is that of Argininosuccinate lyase from Burkholderia orbicola (strain MC0-3).